A 304-amino-acid chain; its full sequence is Acetyl-coenzyme A carboxylase carboxyl transferase subunit beta (304 aa).

In terms of domain architecture, CoA carboxyltransferase N-terminal spans 29-298 (LWTKCVSCAA…QAYRPSPQAS (270 aa)). The Zn(2+) site is built by Cys33, Cys36, Cys52, and Cys55. The C4-type zinc-finger motif lies at 33–55 (CVSCAALHYTKDFQLNLCVCPAC).

This sequence belongs to the AccD/PCCB family. As to quaternary structure, acetyl-CoA carboxylase is a heterohexamer composed of biotin carboxyl carrier protein (AccB), biotin carboxylase (AccC) and two subunits each of ACCase subunit alpha (AccA) and ACCase subunit beta (AccD). Zn(2+) is required as a cofactor.

The protein localises to the cytoplasm. The enzyme catalyses N(6)-carboxybiotinyl-L-lysyl-[protein] + acetyl-CoA = N(6)-biotinyl-L-lysyl-[protein] + malonyl-CoA. It functions in the pathway lipid metabolism; malonyl-CoA biosynthesis; malonyl-CoA from acetyl-CoA: step 1/1. Its function is as follows. Component of the acetyl coenzyme A carboxylase (ACC) complex. Biotin carboxylase (BC) catalyzes the carboxylation of biotin on its carrier protein (BCCP) and then the CO(2) group is transferred by the transcarboxylase to acetyl-CoA to form malonyl-CoA. The polypeptide is Acetyl-coenzyme A carboxylase carboxyl transferase subunit beta (Gloeobacter violaceus (strain ATCC 29082 / PCC 7421)).